Here is a 105-residue protein sequence, read N- to C-terminus: MADFLGMMKQAAQLQSKMKEMQEQLDQVEVEGSAGGSMVTVRMTAKMELKAVSIDPSLMKPEEREVLEDLLVAAQNDARRKAEEAMQERMKALTGGLSIPGLGLG.

The protein belongs to the YbaB/EbfC family. As to quaternary structure, homodimer.

It localises to the cytoplasm. Its subcellular location is the nucleoid. Binds to DNA and alters its conformation. May be involved in regulation of gene expression, nucleoid organization and DNA protection. The chain is Nucleoid-associated protein OCAR_7544/OCA5_c05960 from Afipia carboxidovorans (strain ATCC 49405 / DSM 1227 / KCTC 32145 / OM5) (Oligotropha carboxidovorans).